A 236-amino-acid chain; its full sequence is (5-formylfuran-3-yl)methyl phosphate synthase (236 aa).

Lys27 acts as the Schiff-base intermediate with substrate in catalysis. Residue Lys85 is the Proton acceptor of the active site.

It belongs to the MfnB family.

It catalyses the reaction 2 D-glyceraldehyde 3-phosphate = 4-(hydroxymethyl)-2-furancarboxaldehyde phosphate + phosphate + 2 H2O. Its pathway is cofactor biosynthesis; methanofuran biosynthesis. Catalyzes the formation of 4-(hydroxymethyl)-2-furancarboxaldehyde phosphate (4-HFC-P) from two molecules of glyceraldehyde-3-P (GA-3-P). This chain is (5-formylfuran-3-yl)methyl phosphate synthase, found in Methanococcus maripaludis (strain C7 / ATCC BAA-1331).